Consider the following 350-residue polypeptide: tRNA N6-adenosine threonylcarbamoyltransferase (350 aa).

Fe cation contacts are provided by His-115 and His-119. Substrate-binding positions include 137 to 141 (IISGG), Asp-170, Gly-183, and Asn-281. Asp-309 contacts Fe cation.

The protein belongs to the KAE1 / TsaD family. The cofactor is Fe(2+).

The protein resides in the cytoplasm. The enzyme catalyses L-threonylcarbamoyladenylate + adenosine(37) in tRNA = N(6)-L-threonylcarbamoyladenosine(37) in tRNA + AMP + H(+). Functionally, required for the formation of a threonylcarbamoyl group on adenosine at position 37 (t(6)A37) in tRNAs that read codons beginning with adenine. Is involved in the transfer of the threonylcarbamoyl moiety of threonylcarbamoyl-AMP (TC-AMP) to the N6 group of A37, together with TsaE and TsaB. TsaD likely plays a direct catalytic role in this reaction. In Ehrlichia canis (strain Jake), this protein is tRNA N6-adenosine threonylcarbamoyltransferase.